The chain runs to 583 residues: MAENKKFSIRKKRECSYPTFRTLYEFNKFFLRYKTEISKIQRRTSSLIQYEEHSSAIFIYYETPQMFDLATKALQTLYNSHTREGETKAASKWYRNPRKDFPSQEAALVRKKKRDALILKKYLLNVDPSLSFRAEGLFTLPSDDLDVYEFFGGENLTLFNQVRVDCQCYIHYLPKLAAFYVRCDSVKNLKVALKRVKHIFYEQVSLIRLERTQPILHLMNFDDYSTSYELFYDRNFPLAKKYKPNSIYLHRLPESIPTPVDSVKINLIRERSFNLLKNFVSASLFNVFLFSGTVFMRVKVGIPLFERLKVGTNKVKNNSVNIAQSFLEPQTRSTFLRYLFSDEVSVKVCHVLKELRSPTGEKLFESFSDDPITAVHFEVMNCKGVQDTLTAIWNTNSGKPSGWYLESTMYKALDVTYYNLNTLSWNLYIEYGHPTQNSTFYKEFISNISMSDDGRIYFMNTRDIKVRSLVVKLKHKYWHLSSGFHLHITRFEAHDMGKVKDIDTDFEPGLQCYQVGSDTSVLRYGLSFWDPKWDYLLADNQHKQQWQAPSYKPLISEFFPMGIEHFIETAQSIVMAVNRSTID.

This is an uncharacterized protein from Schizosaccharomyces pombe (strain 972 / ATCC 24843) (Fission yeast).